A 368-amino-acid polypeptide reads, in one-letter code: Glycolate oxidase 2 (368 aa).

One can recognise an FMN hydroxy acid dehydrogenase domain in the interval 1–360 (MALVTNVCEY…TRGHVVTESD (360 aa)). FMN contacts are provided by residues 78-80 (PTA), S107, 128-130 (QLS), and T156. R165 lines the glyoxylate pocket. Positions 231 and 253 each coordinate FMN. Residues H255 and R258 each contribute to the glyoxylate site. The active-site Proton acceptor is H255. Residues 286 to 290 (DSGFR) and 309 to 310 (GR) each bind FMN. Residues 366 to 368 (SRL) carry the Microbody targeting signal motif.

The protein belongs to the FMN-dependent alpha-hydroxy acid dehydrogenase family. As to quaternary structure, homotetramer. FMN serves as cofactor.

It is found in the peroxisome. It catalyses the reaction glycolate + O2 = glyoxylate + H2O2. It functions in the pathway photosynthesis; photorespiration; glycine from 2-phosphoglycolate: step 2/3. Functionally, catalyzes the oxidation of glycolate to glyoxylate, with a reduction of O2 to H2O2. Is a key enzyme in photorespiration in green plants. This Oryza sativa subsp. indica (Rice) protein is Glycolate oxidase 2 (GLO2).